The following is a 617-amino-acid chain: Probable potassium transport system protein Kup 3 (617 aa).

Transmembrane regions (helical) follow at residues 42-62 (VASL…ALLI), 95-115 (LVVG…TPAI), 129-149 (PSLA…LFMM), 160-180 (IFGP…IHGI), 206-226 (VSFA…AMYA), 240-260 (WFAI…ALLI), 282-302 (LVAF…SGVF), 330-350 (IYVP…VLSF), 360-380 (YGIA…LVAI), 386-406 (PWLV…FFSA), and 411-431 (LFEG…MMLT).

This sequence belongs to the HAK/KUP transporter (TC 2.A.72) family.

The protein resides in the cell inner membrane. The enzyme catalyses K(+)(in) + H(+)(in) = K(+)(out) + H(+)(out). Functionally, transport of potassium into the cell. Likely operates as a K(+):H(+) symporter. In Bradyrhizobium diazoefficiens (strain JCM 10833 / BCRC 13528 / IAM 13628 / NBRC 14792 / USDA 110), this protein is Probable potassium transport system protein Kup 3.